A 433-amino-acid chain; its full sequence is Trigger factor (433 aa).

The PPIase FKBP-type domain occupies 161–246 (EDRATIDFTG…LKKVEERELP (86 aa)).

This sequence belongs to the FKBP-type PPIase family. Tig subfamily.

The protein resides in the cytoplasm. The catalysed reaction is [protein]-peptidylproline (omega=180) = [protein]-peptidylproline (omega=0). Its function is as follows. Involved in protein export. Acts as a chaperone by maintaining the newly synthesized protein in an open conformation. Functions as a peptidyl-prolyl cis-trans isomerase. This chain is Trigger factor, found in Edwardsiella ictaluri (strain 93-146).